The primary structure comprises 399 residues: Cell division protein FtsZ (399 aa).

Residues 30 to 34 (GGGSN), 117 to 119 (GTG), Glu-148, Lys-152, and Asp-196 each bind GTP. The disordered stretch occupies residues 349–368 (TLMSGNQNAPSGSYEQQDSS). The span at 351–368 (MSGNQNAPSGSYEQQDSS) shows a compositional bias: polar residues.

Belongs to the FtsZ family. Homodimer. Polymerizes to form a dynamic ring structure in a strictly GTP-dependent manner. Interacts directly with several other division proteins.

It localises to the cytoplasm. Essential cell division protein that forms a contractile ring structure (Z ring) at the future cell division site. The regulation of the ring assembly controls the timing and the location of cell division. One of the functions of the FtsZ ring is to recruit other cell division proteins to the septum to produce a new cell wall between the dividing cells. Binds GTP and shows GTPase activity. This Borreliella burgdorferi (strain ATCC 35210 / DSM 4680 / CIP 102532 / B31) (Borrelia burgdorferi) protein is Cell division protein FtsZ.